A 62-amino-acid chain; its full sequence is Photosystem II reaction center protein Z (62 aa).

Helical transmembrane passes span 8–28 and 41–61; these read TLFA…VVFA and FSGV…NSFV.

It belongs to the PsbZ family. In terms of assembly, PSII is composed of 1 copy each of membrane proteins PsbA, PsbB, PsbC, PsbD, PsbE, PsbF, PsbH, PsbI, PsbJ, PsbK, PsbL, PsbM, PsbT, PsbY, PsbZ, Psb30/Ycf12, at least 3 peripheral proteins of the oxygen-evolving complex and a large number of cofactors. It forms dimeric complexes.

The protein localises to the plastid. It is found in the chloroplast thylakoid membrane. Its function is as follows. May control the interaction of photosystem II (PSII) cores with the light-harvesting antenna, regulates electron flow through the 2 photosystem reaction centers. PSII is a light-driven water plastoquinone oxidoreductase, using light energy to abstract electrons from H(2)O, generating a proton gradient subsequently used for ATP formation. This is Photosystem II reaction center protein Z from Oltmannsiellopsis viridis (Marine flagellate).